The primary structure comprises 512 residues: Tyrosine-protein kinase Lyn (512 aa).

The segment at 1-50 is disordered; the sequence is MGCIKSKRKDNLNDDGVDMKTQPVRNTDRTIYVRDPTSNKQQRPVPESQL. G2 carries the N-myristoyl glycine lipid modification. The S-palmitoyl cysteine moiety is linked to residue C3. Positions 63–123 constitute an SH3 domain; sequence EQGDIVVALY…PSNYVAKVNT (61 aa). The SH2 domain maps to 129-226; that stretch reads WFFKDITRKD…GLCRRLEKAC (98 aa). Y193 carries the phosphotyrosine modification. A Phosphoserine modification is found at S228. In terms of domain architecture, Protein kinase spans 247–501; it reads IKLVKKLGAG…YLQSVLDDFY (255 aa). ATP-binding positions include 253–261 and K275; that span reads LGAGQFGEV. Residues Y306 and Y316 each carry the phosphotyrosine modification. Catalysis depends on D367, which acts as the Proton acceptor. Y397 carries the phosphotyrosine; by autocatalysis modification. Phosphotyrosine is present on residues Y460 and Y473. At Y508 the chain carries Phosphotyrosine; by autocatalysis, CSK and MATK.

This sequence belongs to the protein kinase superfamily. Tyr protein kinase family. SRC subfamily. As to quaternary structure, interacts with TEC. Interacts (via SH2 domain) with FLT3 (tyrosine phosphorylated). Interacts with LIME1 and with CD79A upon activation of the B-cell antigen receptor. Interacts with the B-cell receptor complex. Interacts with phosphorylated THEMIS2. Interacts with EPOR. Interacts with MS4A2/FCER1B. Interaction (via the SH2 and SH3 domains) with MUC1 is stimulated by IL7 and the subsequent phosphorylation increases the binding between MUC1 and CTNNB1/beta-catenin. Interacts with ADAM15. Interacts with NDFIP2 and more weakly with NDFIP1. Interacts with FASLG. Interacts with KIT. Interacts with HCLS1. Interacts with FCGR2B. Interacts with FCGR1A; the interaction may be indirect. Interacts with CD19, CD22, CD79A and CD79B. Interacts (via SH3 domain) with CBLC, PPP1R15A and PDE4A. Interacts with TGFB1I1. Interacts (via SH3 domain) with PIK3R1, the regulatory subunit of phosphatidylinositol 3-kinase; this interaction enhances phosphatidylinositol 3-kinase activity. Interacts with CSF2RB, the common subunit of the IL3, IL5 and CSF2 receptors. Interacts with PAG1; identified in a complex with PAG1 and STAT3. Interacts with ABL1. Interacts with PTPN6/SHP-1. Interacts (via SH3 domain) with SCIMP (via proline-rich region). This interaction facilitates the phosphorylation of SCIMP 'Tyr-96', which enhances binding of SCIMP to TLR4, and consequently the phosphorylation of TLR4 in response to stimulation by lipopolysaccharide in macrophages. Interacts with LPXN (via LD motif 3) and the interaction is induced upon B-cell antigen receptor (BCR) activation. Interacts (via SH3-domain) with ANKRD54 (via ankyrin repeat region) in an activation-independent status of LYN. Forms a multiprotein complex with ANKRD54 and HCLS1. Interacts (via SH2 and SH3 domains) with UNC119; leading to LYN activation. Interacts with CD36. Interacts with LYN. Interacts with SKAP1 and FYB1; this interaction promotes the phosphorylation of CLNK. Interacts with BCAR1/CAS and NEDD9/HEF1. Ubiquitinated. Ubiquitination is SH3-dependent. Post-translationally, autophosphorylated. Phosphorylated on tyrosine residues in response to KIT signaling. Phosphorylation at Tyr-397 is required for optimal activity. Phosphorylation at Tyr-508 inhibits kinase activity. Phosphorylated at Tyr-508 by CSK. Dephosphorylated by PTPRC/CD45. Becomes rapidly phosphorylated upon activation of the B-cell receptor and the immunoglobulin receptor FCGR1A. Phosphorylated in response to integrin ITGB1 in B-cells. Detected in spleen (at protein level). Expressed predominantly in B-lymphoid and myeloid cells.

The protein resides in the cell membrane. Its subcellular location is the nucleus. It localises to the cytoplasm. It is found in the perinuclear region. The protein localises to the golgi apparatus. The protein resides in the membrane. It catalyses the reaction L-tyrosyl-[protein] + ATP = O-phospho-L-tyrosyl-[protein] + ADP + H(+). Its activity is regulated as follows. Subject to autoinhibition, mediated by intramolecular interactions between the SH2 domain and the C-terminal phosphotyrosine. Phosphorylation at Tyr-397 is required for optimal activity. Phosphorylated by CSK at Tyr-508; phosphorylation at Tyr-508 inhibits kinase activity. Kinase activity is modulated by dephosphorylation by PTPRC/CD45. Its function is as follows. Non-receptor tyrosine-protein kinase that transmits signals from cell surface receptors and plays an important role in the regulation of innate and adaptive immune responses, hematopoiesis, responses to growth factors and cytokines, integrin signaling, but also responses to DNA damage and genotoxic agents. Functions primarily as negative regulator, but can also function as activator, depending on the context. Required for the initiation of the B-cell response, but also for its down-regulation and termination. Plays an important role in the regulation of B-cell differentiation, proliferation, survival and apoptosis, and is important for immune self-tolerance. Acts downstream of several immune receptors, including the B-cell receptor, CD79A, CD79B, CD5, CD19, CD22, FCER1, FCGR2, FCGR1A, TLR2 and TLR4. Plays a role in the inflammatory response to bacterial lipopolysaccharide. Mediates the responses to cytokines and growth factors in hematopoietic progenitors, platelets, erythrocytes, and in mature myeloid cells, such as dendritic cells, neutrophils and eosinophils. Acts downstream of EPOR, KIT, MPL, the chemokine receptor CXCR4, as well as the receptors for IL3, IL5 and CSF2. Plays an important role in integrin signaling. Regulates cell proliferation, survival, differentiation, migration, adhesion, degranulation, and cytokine release. Involved in the regulation of endothelial activation, neutrophil adhesion and transendothelial migration. Down-regulates signaling pathways by phosphorylation of immunoreceptor tyrosine-based inhibitory motifs (ITIM), that then serve as binding sites for phosphatases, such as PTPN6/SHP-1, PTPN11/SHP-2 and INPP5D/SHIP-1, that modulate signaling by dephosphorylation of kinases and their substrates. Phosphorylates LIME1 in response to CD22 activation. Phosphorylates BTK, CBL, CD5, CD19, CD72, CD79A, CD79B, CSF2RB, DOK1, HCLS1, LILRB3/PIR-B, MS4A2/FCER1B, SYK and TEC. Promotes phosphorylation of SIRPA, PTPN6/SHP-1, PTPN11/SHP-2 and INPP5D/SHIP-1. Required for rapid phosphorylation of FER in response to FCER1 activation. Mediates KIT phosphorylation. Acts as an effector of EPOR (erythropoietin receptor) in controlling KIT expression and may play a role in erythroid differentiation during the switch between proliferation and maturation. Depending on the context, activates or inhibits several signaling cascades. Regulates phosphatidylinositol 3-kinase activity and AKT1 activation. Regulates activation of the MAP kinase signaling cascade, including activation of MAP2K1/MEK1, MAPK1/ERK2, MAPK3/ERK1, MAPK8/JNK1 and MAPK9/JNK2. Mediates activation of STAT5A and/or STAT5B. Phosphorylates LPXN on 'Tyr-72'. Kinase activity facilitates TLR4-TLR6 heterodimerization and signal initiation. Phosphorylates SCIMP on 'Tyr-96'; this enhances binding of SCIMP to TLR4, promoting the phosphorylation of TLR4, and a selective cytokine response to lipopolysaccharide in macrophages. Phosphorylates CLNK. Phosphorylates BCAR1/CAS and NEDD9/HEF1. The polypeptide is Tyrosine-protein kinase Lyn (Lyn) (Rattus norvegicus (Rat)).